The following is a 331-amino-acid chain: L-lactate dehydrogenase A chain (331 aa).

NAD(+) contacts are provided by residues 29 to 57 (GMVG…MEDK) and R98. R105, N137, and R168 together coordinate substrate. NAD(+) is bound at residue N137. Catalysis depends on H192, which acts as the Proton acceptor. T247 is a substrate binding site.

The protein belongs to the LDH/MDH superfamily. LDH family. In terms of assembly, homotetramer.

It is found in the cytoplasm. The catalysed reaction is (S)-lactate + NAD(+) = pyruvate + NADH + H(+). It functions in the pathway fermentation; pyruvate fermentation to lactate; (S)-lactate from pyruvate: step 1/1. Functionally, interconverts simultaneously and stereospecifically pyruvate and lactate with concomitant interconversion of NADH and NAD(+). The sequence is that of L-lactate dehydrogenase A chain (ldha) from Parachaenichthys charcoti (Charcot's dragonfish).